Consider the following 147-residue polypeptide: Ribonuclease H (147 aa).

Mg(2+) is bound by residues Asp-8, Glu-46, Asp-68, and Asp-132.

The protein belongs to the RNase H family. In terms of assembly, monomer. The cofactor is Mg(2+).

It is found in the cytoplasm. The enzyme catalyses Endonucleolytic cleavage to 5'-phosphomonoester.. In terms of biological role, endonuclease that specifically degrades the RNA of RNA-DNA hybrids. This Geotalea uraniireducens (strain Rf4) (Geobacter uraniireducens) protein is Ribonuclease H.